Here is a 435-residue protein sequence, read N- to C-terminus: Serine--tRNA ligase (435 aa).

Residue 241–243 coordinates L-serine; the sequence is TAE. Residue 272 to 274 coordinates ATP; sequence RSE. Glutamate 295 provides a ligand contact to L-serine. 359 to 362 contacts ATP; the sequence is EISS. L-serine is bound at residue serine 395.

This sequence belongs to the class-II aminoacyl-tRNA synthetase family. Type-1 seryl-tRNA synthetase subfamily. As to quaternary structure, homodimer. The tRNA molecule binds across the dimer.

It is found in the cytoplasm. It catalyses the reaction tRNA(Ser) + L-serine + ATP = L-seryl-tRNA(Ser) + AMP + diphosphate + H(+). The enzyme catalyses tRNA(Sec) + L-serine + ATP = L-seryl-tRNA(Sec) + AMP + diphosphate + H(+). It participates in aminoacyl-tRNA biosynthesis; selenocysteinyl-tRNA(Sec) biosynthesis; L-seryl-tRNA(Sec) from L-serine and tRNA(Sec): step 1/1. Its function is as follows. Catalyzes the attachment of serine to tRNA(Ser). Is also able to aminoacylate tRNA(Sec) with serine, to form the misacylated tRNA L-seryl-tRNA(Sec), which will be further converted into selenocysteinyl-tRNA(Sec). The protein is Serine--tRNA ligase of Actinobacillus pleuropneumoniae serotype 7 (strain AP76).